Consider the following 231-residue polypeptide: Superoxide dismutase [Mn] 1, mitochondrial (231 aa).

Residues 1 to 29 (MAIRCVASRKTLAGLKETSSRLLRIRGIQ) constitute a mitochondrion transit peptide. Residues His55 and His103 each coordinate Mn(2+). Ser124 is modified (phosphoserine). 2 residues coordinate Mn(2+): Asp192 and His196.

This sequence belongs to the iron/manganese superoxide dismutase family. Homotetramer. Mn(2+) serves as cofactor.

It localises to the mitochondrion matrix. It carries out the reaction 2 superoxide + 2 H(+) = H2O2 + O2. With respect to regulation, activated by MTM1. Its function is as follows. Destroys superoxide anion radicals which are normally produced within the cells and which are toxic to biological systems. The chain is Superoxide dismutase [Mn] 1, mitochondrial (MSD1) from Arabidopsis thaliana (Mouse-ear cress).